The following is a 148-amino-acid chain: Lysozyme C (148 aa).

An N-terminal signal peptide occupies residues 1 to 18; that stretch reads MKVLILLGLVLLSVMVQG. The 130-residue stretch at 19-148 folds into the C-type lysozyme domain; that stretch reads KVFERCELAR…VSQYIQGCGV (130 aa). Cystine bridges form between cysteine 24/cysteine 146, cysteine 48/cysteine 134, cysteine 83/cysteine 99, and cysteine 95/cysteine 113. Catalysis depends on residues glutamate 53 and aspartate 71.

It belongs to the glycosyl hydrolase 22 family. In terms of assembly, monomer.

Its subcellular location is the secreted. The catalysed reaction is Hydrolysis of (1-&gt;4)-beta-linkages between N-acetylmuramic acid and N-acetyl-D-glucosamine residues in a peptidoglycan and between N-acetyl-D-glucosamine residues in chitodextrins.. Its function is as follows. Lysozymes have primarily a bacteriolytic function; those in tissues and body fluids are associated with the monocyte-macrophage system and enhance the activity of immunoagents. In Saguinus oedipus (Cotton-top tamarin), this protein is Lysozyme C (LYZ).